A 475-amino-acid chain; its full sequence is UDP-N-acetylmuramate--L-alanine ligase (475 aa).

117–123 (GTHGKTT) is an ATP binding site.

This sequence belongs to the MurCDEF family.

It is found in the cytoplasm. The catalysed reaction is UDP-N-acetyl-alpha-D-muramate + L-alanine + ATP = UDP-N-acetyl-alpha-D-muramoyl-L-alanine + ADP + phosphate + H(+). The protein operates within cell wall biogenesis; peptidoglycan biosynthesis. Functionally, cell wall formation. The protein is UDP-N-acetylmuramate--L-alanine ligase of Chlorobaculum tepidum (strain ATCC 49652 / DSM 12025 / NBRC 103806 / TLS) (Chlorobium tepidum).